Reading from the N-terminus, the 120-residue chain is Large ribosomal subunit protein uL18c (120 aa).

The protein belongs to the universal ribosomal protein uL18 family. In terms of assembly, part of the 50S ribosomal subunit; contacts the 5S rRNA.

The protein resides in the plastid. It is found in the chloroplast. Its function is as follows. Binds 5S rRNA, forms part of the central protuberance of the 50S subunit. The chain is Large ribosomal subunit protein uL18c (rpl18) from Porphyra purpurea (Red seaweed).